The sequence spans 423 residues: Adenylosuccinate synthetase (423 aa).

GTP is bound by residues 12 to 18 and 40 to 42; these read GDEGKGK and GHT. D13 (proton acceptor) is an active-site residue. Mg(2+) is bound by residues D13 and G40. IMP-binding positions include 13–16, 38–41, T128, R142, Q223, T238, and R302; these read DEGK and NAGH. The Proton donor role is filled by H41. 298-304 provides a ligand contact to substrate; that stretch reads TTTGRPR. GTP contacts are provided by residues R304, 330-332, and 412-414; these read RLD and CIG.

Belongs to the adenylosuccinate synthetase family. In terms of assembly, homodimer. Mg(2+) serves as cofactor.

It localises to the cytoplasm. The enzyme catalyses IMP + L-aspartate + GTP = N(6)-(1,2-dicarboxyethyl)-AMP + GDP + phosphate + 2 H(+). The protein operates within purine metabolism; AMP biosynthesis via de novo pathway; AMP from IMP: step 1/2. In terms of biological role, plays an important role in the de novo pathway of purine nucleotide biosynthesis. Catalyzes the first committed step in the biosynthesis of AMP from IMP. In Dehalococcoides mccartyi (strain ATCC BAA-2100 / JCM 16839 / KCTC 5957 / BAV1), this protein is Adenylosuccinate synthetase.